Here is a 170-residue protein sequence, read N- to C-terminus: Crossover junction endodeoxyribonuclease RuvC (170 aa).

Active-site residues include aspartate 12, glutamate 72, and aspartate 144. Residues aspartate 12, glutamate 72, and aspartate 144 each coordinate Mg(2+).

Belongs to the RuvC family. As to quaternary structure, homodimer which binds Holliday junction (HJ) DNA. The HJ becomes 2-fold symmetrical on binding to RuvC with unstacked arms; it has a different conformation from HJ DNA in complex with RuvA. In the full resolvosome a probable DNA-RuvA(4)-RuvB(12)-RuvC(2) complex forms which resolves the HJ. It depends on Mg(2+) as a cofactor.

The protein resides in the cytoplasm. The enzyme catalyses Endonucleolytic cleavage at a junction such as a reciprocal single-stranded crossover between two homologous DNA duplexes (Holliday junction).. The RuvA-RuvB-RuvC complex processes Holliday junction (HJ) DNA during genetic recombination and DNA repair. Endonuclease that resolves HJ intermediates. Cleaves cruciform DNA by making single-stranded nicks across the HJ at symmetrical positions within the homologous arms, yielding a 5'-phosphate and a 3'-hydroxyl group; requires a central core of homology in the junction. The consensus cleavage sequence is 5'-(A/T)TT(C/G)-3'. Cleavage occurs on the 3'-side of the TT dinucleotide at the point of strand exchange. HJ branch migration catalyzed by RuvA-RuvB allows RuvC to scan DNA until it finds its consensus sequence, where it cleaves and resolves the cruciform DNA. This is Crossover junction endodeoxyribonuclease RuvC from Nitrobacter hamburgensis (strain DSM 10229 / NCIMB 13809 / X14).